Here is a 330-residue protein sequence, read N- to C-terminus: Phospho-N-acetylmuramoyl-pentapeptide-transferase (330 aa).

The next 9 helical transmembrane spans lie at 13-33 (VFVF…LIPM), 58-78 (PTMG…FYAG), 83-103 (ILPL…DDFI), 113-133 (LYWN…AVYL), 152-172 (VSLG…STNA), 179-199 (LDGL…IVAM), 209-229 (MFSA…AYPA), 231-250 (IFMG…AIAI), and 304-324 (VKVV…GFFA).

The protein belongs to the glycosyltransferase 4 family. MraY subfamily. It depends on Mg(2+) as a cofactor.

It is found in the cell membrane. It catalyses the reaction UDP-N-acetyl-alpha-D-muramoyl-L-alanyl-gamma-D-glutamyl-meso-2,6-diaminopimeloyl-D-alanyl-D-alanine + di-trans,octa-cis-undecaprenyl phosphate = di-trans,octa-cis-undecaprenyl diphospho-N-acetyl-alpha-D-muramoyl-L-alanyl-D-glutamyl-meso-2,6-diaminopimeloyl-D-alanyl-D-alanine + UMP. It functions in the pathway cell wall biogenesis; peptidoglycan biosynthesis. Functionally, catalyzes the initial step of the lipid cycle reactions in the biosynthesis of the cell wall peptidoglycan: transfers peptidoglycan precursor phospho-MurNAc-pentapeptide from UDP-MurNAc-pentapeptide onto the lipid carrier undecaprenyl phosphate, yielding undecaprenyl-pyrophosphoryl-MurNAc-pentapeptide, known as lipid I. This Acetivibrio thermocellus (strain ATCC 27405 / DSM 1237 / JCM 9322 / NBRC 103400 / NCIMB 10682 / NRRL B-4536 / VPI 7372) (Clostridium thermocellum) protein is Phospho-N-acetylmuramoyl-pentapeptide-transferase.